We begin with the raw amino-acid sequence, 537 residues long: Polyadenylate-binding protein 6 (537 aa).

4 consecutive RRM domains span residues 21 to 99, 112 to 188, 202 to 279, and 304 to 381; these read GSLY…WSQR, ANLY…KFIN, TNVY…KALK, and SNLY…VAER. Residues 503-537 form a disordered region; it reads KATTSEENRKEERRLTLSGKLSPEVKVEESGKQLQ. Basic and acidic residues-rich tracts occupy residues 506–517 and 525–537; these read TSEENRKEERRL and PEVKVEESGKQLQ.

The protein belongs to the polyadenylate-binding protein type-1 family. Expressed at low levels in leaves and young seedlings.

It localises to the cytoplasm. Its subcellular location is the nucleus. Binds the poly(A) tail of mRNA. Appears to be an important mediator of the multiple roles of the poly(A) tail in mRNA biogenesis, stability and translation. This chain is Polyadenylate-binding protein 6 (PAB6), found in Arabidopsis thaliana (Mouse-ear cress).